The following is a 585-amino-acid chain: Potassium-transporting ATPase potassium-binding subunit (585 aa).

12 helical membrane-spanning segments follow: residues 23 to 43 (GVIIILIYLIIASVLAYILSF), 85 to 105 (FINLLLFNFFAGLISFLVIMF), 152 to 172 (FVITGLMFLSAGTGFAASMAF), 194 to 214 (IFDLILPLTVILTVILILAGI), 275 to 295 (VEFVSFVIIPLASLISLGIVF), 307 to 327 (VVMFFFIFDALFAFFGEFAGV), 345 to 365 (AIGISQSTIFAVGATITSTGA), 367 to 387 (NAALVSYTPAGIIGVLIGLLL), 397 to 417 (GVLNIFMYIIFTVFIASLMVG), 444 to 464 (LLVVIPLGITLMIPHLMSSFV), 502 to 522 (LDGVLMLLGRYLLMAFQLIIA), and 547 to 567 (VLLIAAMILIGLLSYFPIIVL).

This sequence belongs to the KdpA family. As to quaternary structure, the system is composed of three essential subunits: KdpA, KdpB and KdpC.

Its subcellular location is the cell membrane. In terms of biological role, part of the high-affinity ATP-driven potassium transport (or Kdp) system, which catalyzes the hydrolysis of ATP coupled with the electrogenic transport of potassium into the cytoplasm. This subunit binds the extracellular potassium ions and delivers the ions to the membrane domain of KdpB through an intramembrane tunnel. In Thermoplasma acidophilum (strain ATCC 25905 / DSM 1728 / JCM 9062 / NBRC 15155 / AMRC-C165), this protein is Potassium-transporting ATPase potassium-binding subunit.